The primary structure comprises 299 residues: Acetylglutamate kinase (299 aa).

Substrate-binding positions include 70 to 71 (GG), R92, and N197.

Belongs to the acetylglutamate kinase family. ArgB subfamily.

It is found in the cytoplasm. It catalyses the reaction N-acetyl-L-glutamate + ATP = N-acetyl-L-glutamyl 5-phosphate + ADP. Its pathway is amino-acid biosynthesis; L-arginine biosynthesis; N(2)-acetyl-L-ornithine from L-glutamate: step 2/4. In terms of biological role, catalyzes the ATP-dependent phosphorylation of N-acetyl-L-glutamate. The chain is Acetylglutamate kinase from Acidiphilium cryptum (strain JF-5).